The chain runs to 112 residues: Type III inner-rod protein PscI (112 aa).

This sequence belongs to the YscI/HrpB family. Homomultimer (through its C-terminal region).

In terms of biological role, component of the type III secretion (T3S) injectisome that translocates effector toxins into host cells, facilitating the establishment and dissemination of infection. Polymerizes into flexible and regularly twisted fibrils and plays an essential role in needle assembly. The sequence is that of Type III inner-rod protein PscI (pscI) from Pseudomonas aeruginosa (strain ATCC 15692 / DSM 22644 / CIP 104116 / JCM 14847 / LMG 12228 / 1C / PRS 101 / PAO1).